An 870-amino-acid polypeptide reads, in one-letter code: Probable disease resistance protein At1g59620 (870 aa).

The NB-ARC domain maps to 123 to 432 (DKRNMRQTFS…AAEGMPRPRY (310 aa)). An ATP-binding site is contributed by 167-174 (GMGGIGKT). LRR repeat units follow at residues 543 to 567 (LQLMRVLDLHGVEFGGELPSSIGLL), 568 to 590 (IHLRYLSLYRAKASHLPSSMQNL), 703 to 726 (MSGIEGLVLDCDQLKHLNLRIYMP), 735 to 758 (PWHLRNISLAECCLKEDPMPILEK), 759 to 786 (LLQLNEVSLSHQSFCGKRMVCSDGGFPQ), and 808 to 833 (MPRLHKLTIRNDPKLKELPDGLKFIT).

The protein belongs to the disease resistance NB-LRR family.

Its function is as follows. Probable disease resistance protein. The sequence is that of Probable disease resistance protein At1g59620 from Arabidopsis thaliana (Mouse-ear cress).